Reading from the N-terminus, the 336-residue chain is Fructose-1,6-bisphosphatase class 1 (336 aa).

Mg(2+) is bound by residues Glu-90, Asp-112, Leu-114, and Asp-115. Substrate is bound by residues 115–118 (DGSS), Asn-211, and Lys-277. Glu-283 contributes to the Mg(2+) binding site.

It belongs to the FBPase class 1 family. As to quaternary structure, homotetramer. Mg(2+) serves as cofactor.

It is found in the cytoplasm. The catalysed reaction is beta-D-fructose 1,6-bisphosphate + H2O = beta-D-fructose 6-phosphate + phosphate. It participates in carbohydrate biosynthesis; gluconeogenesis. The polypeptide is Fructose-1,6-bisphosphatase class 1 (Pseudomonas putida (strain W619)).